We begin with the raw amino-acid sequence, 141 residues long: Large ribosomal subunit protein uL16 (141 aa).

The protein belongs to the universal ribosomal protein uL16 family. Part of the 50S ribosomal subunit.

Functionally, binds 23S rRNA and is also seen to make contacts with the A and possibly P site tRNAs. The sequence is that of Large ribosomal subunit protein uL16 from Sulfurimonas denitrificans (strain ATCC 33889 / DSM 1251) (Thiomicrospira denitrificans (strain ATCC 33889 / DSM 1251)).